Reading from the N-terminus, the 403-residue chain is L-cysteine:1D-myo-inositol 2-amino-2-deoxy-alpha-D-glucopyranoside ligase (403 aa).

Cys-43 provides a ligand contact to Zn(2+). L-cysteinyl-5'-AMP is bound by residues 43–46 (CGIT), Thr-58, and 81–83 (NTT). The 'HIGH' region motif lies at 45–55 (ITPYDATHLGH). The 'ERGGDP' region signature appears at 183–188 (ERGGDP). Trp-223 provides a ligand contact to L-cysteinyl-5'-AMP. Cys-227 is a binding site for Zn(2+). 245-247 (GSD) serves as a coordination point for L-cysteinyl-5'-AMP. His-252 lines the Zn(2+) pocket. Val-279 contacts L-cysteinyl-5'-AMP. The short motif at 285–289 (KMSKS) is the 'KMSKS' region element.

This sequence belongs to the class-I aminoacyl-tRNA synthetase family. MshC subfamily. As to quaternary structure, monomer. Zn(2+) is required as a cofactor.

It catalyses the reaction 1D-myo-inositol 2-amino-2-deoxy-alpha-D-glucopyranoside + L-cysteine + ATP = 1D-myo-inositol 2-(L-cysteinylamino)-2-deoxy-alpha-D-glucopyranoside + AMP + diphosphate + H(+). Functionally, catalyzes the ATP-dependent condensation of GlcN-Ins and L-cysteine to form L-Cys-GlcN-Ins. This is L-cysteine:1D-myo-inositol 2-amino-2-deoxy-alpha-D-glucopyranoside ligase from Thermobispora bispora (strain ATCC 19993 / DSM 43833 / CBS 139.67 / JCM 10125 / KCTC 9307 / NBRC 14880 / R51).